The primary structure comprises 561 residues: Oxygen-dependent choline dehydrogenase (561 aa).

7–36 (DYIIVGAGSAGNVLASRLTEDADVTVLLLE) serves as a coordination point for FAD. Histidine 474 functions as the Proton acceptor in the catalytic mechanism.

The protein belongs to the GMC oxidoreductase family. Requires FAD as cofactor.

The enzyme catalyses choline + A = betaine aldehyde + AH2. It carries out the reaction betaine aldehyde + NAD(+) + H2O = glycine betaine + NADH + 2 H(+). Its pathway is amine and polyamine biosynthesis; betaine biosynthesis via choline pathway; betaine aldehyde from choline (cytochrome c reductase route): step 1/1. Functionally, involved in the biosynthesis of the osmoprotectant glycine betaine. Catalyzes the oxidation of choline to betaine aldehyde and betaine aldehyde to glycine betaine at the same rate. This is Oxygen-dependent choline dehydrogenase from Paraburkholderia phytofirmans (strain DSM 17436 / LMG 22146 / PsJN) (Burkholderia phytofirmans).